The sequence spans 456 residues: GTPase Der (456 aa).

EngA-type G domains are found at residues 4 to 169 (PIVA…PSKE) and 178 to 353 (IQLA…EQHR). GTP contacts are provided by residues 10-17 (GRPNVGKS), 57-61 (DTGGL), 120-123 (NKCE), 184-191 (GRPNVGKS), 231-235 (DTAGI), and 296-299 (NKWD). Residues 354–439 (RRVSTSVVNE…PLKLFWRGKQ (86 aa)) enclose the KH-like domain.

Belongs to the TRAFAC class TrmE-Era-EngA-EngB-Septin-like GTPase superfamily. EngA (Der) GTPase family. Associates with the 50S ribosomal subunit.

In terms of biological role, GTPase that plays an essential role in the late steps of ribosome biogenesis. In Prochlorococcus marinus (strain MIT 9211), this protein is GTPase Der.